Here is a 165-residue protein sequence, read N- to C-terminus: Phosphopantetheine adenylyltransferase (165 aa).

Residue threonine 11 participates in substrate binding. Residues 11-12 (TF) and histidine 19 each bind ATP. Lysine 43, valine 75, and arginine 89 together coordinate substrate. ATP contacts are provided by residues 90 to 92 (GLR), glutamate 100, and 125 to 131 (YQFISST).

The protein belongs to the bacterial CoaD family. In terms of assembly, homohexamer. Mg(2+) is required as a cofactor.

The protein resides in the cytoplasm. The enzyme catalyses (R)-4'-phosphopantetheine + ATP + H(+) = 3'-dephospho-CoA + diphosphate. It functions in the pathway cofactor biosynthesis; coenzyme A biosynthesis; CoA from (R)-pantothenate: step 4/5. In terms of biological role, reversibly transfers an adenylyl group from ATP to 4'-phosphopantetheine, yielding dephospho-CoA (dPCoA) and pyrophosphate. The protein is Phosphopantetheine adenylyltransferase of Acidovorax ebreus (strain TPSY) (Diaphorobacter sp. (strain TPSY)).